We begin with the raw amino-acid sequence, 5255 residues long: SCO-spondin (5255 aa).

The first 18 residues, 1–18 (MGIVATVLLWVVTEAARG), serve as a signal peptide directing secretion. The EMI domain occupies 19–111 (RWCERTEQVT…ACCAGWSGPH (93 aa)). 4 N-linked (GlcNAc...) asparagine glycosylation sites follow: N97, N136, N156, and N255. One can recognise a VWFD 1 domain in the interval 192-358 (ASCTVWAGSR…PDANPELSCS (167 aa)). Intrachain disulfides connect C194–C317 and C216–C357. The region spanning 453–508 (CGHGQRYSDCVSSCPASCMAAGTAEEGHCRDDCASGCECTPGLLLDRGACIPQSAC) is the TIL 1 domain. Residues 508–601 (CPCLHRGHIY…CGGHQPLSCL (94 aa)) form the VWFC 1 domain. Residues 546–717 (AECAVLGDLH…NKYRVSTDCP (172 aa)) enclose the VWFD 2 domain. 3 disulfides stabilise this stretch: C548-C681, C570-C716, and C592-C600. N801 carries N-linked (GlcNAc...) asparagine glycosylation. One can recognise a TIL 2 domain in the interval 809–868 (CRGGQVYQECSSPCGRTCADLRLDGASSCPSLDNICVSGCNCPEGPVLDDGGQCVPPGVC). The 59-residue stretch at 868-926 (CPCQHSSQLYPAGSKIRQGCNACMCTAGTWSCTDAPCPDAAFCPGDLVYVFGSCLRTCD) folds into the VWFC 2 domain. 2 N-linked (GlcNAc...) asparagine glycosylation sites follow: N931 and N972. The VWFD 3 domain maps to 998-1168 (GTCVATGDPH…NSWRVSLLCP (171 aa)). Cystine bridges form between C1000/C1132, C1022/C1167, and C1043/C1050. The region spanning 1263 to 1319 (CDGGQEYSACGPPCPQTCRNLGLELPEHCDTMSCLEGCFCPEGKVLHEGSCIDPAEC) is the TIL 3 domain. The N-linked (GlcNAc...) asparagine glycan is linked to N1340. LDL-receptor class A domains follow at residues 1362–1398 (HCPD…EVCA), 1400–1436 (HCAP…RGCP), 1439–1477 (PCAP…AGCS), 1479–1515 (SCSV…RGCV), 1515–1551 (VCPA…AFCP), and 1555–1593 (TCAP…VRCM). Disulfide bonds link C1363/C1376, C1370/C1389, C1383/C1397, C1401/C1413, C1408/C1426, C1420/C1435, C1440/C1452, C1447/C1465, C1459/C1476, C1480/C1492, C1487/C1505, C1499/C1514, C1516/C1528, C1523/C1541, C1535/C1550, C1556/C1568, C1563/C1581, and C1575/C1592. N1610 is a glycosylation site (N-linked (GlcNAc...) asparagine). 3 LDL-receptor class A domains span residues 1616–1652 (VCGP…LGCN), 1654–1693 (SCVL…DNCG), and 1699–1734 (PCPG…LACE). Cystine bridges form between C1617/C1629, C1624/C1642, and C1636/C1651. N1652 carries an N-linked (GlcNAc...) asparagine glycan. 6 disulfide bridges follow: C1655/C1668, C1662/C1681, C1675/C1692, C1700/C1711, C1706/C1724, and C1718/C1733. N1713 carries N-linked (GlcNAc...) asparagine glycosylation. The N-linked (GlcNAc...) asparagine glycan is linked to N1743. Residues 1748 to 1790 (PCAEYSCRDGDCITFKQVCNGLPDCRDGDMASGWLPSDEWDCG) form the LDL-receptor class A 10 domain. 6 disulfide bridges follow: C1749–C1759, C1754–C1772, C1766–C1789, C1801–C1837, C1805–C1842, and C1816–C1827. 2 consecutive TSP type-1 domains span residues 1789–1843 (CGQW…TACP) and 1845–1903 (DGAW…DGCP). N1856 carries an N-linked (GlcNAc...) asparagine glycan. 3 cysteine pairs are disulfide-bonded: C1857-C1897, C1861-C1902, and C1871-C1881. A TIL 4 domain is found at 1907–1961 (CPGGLQPRPCAPCPASCADLASRAPCRREQCTPGCWCAEGLVLDGERGCVRPREC). EGF-like domains lie at 1919–1956 (CPAS…RGCV) and 1957–1983 (RPRE…CRLC). The VWFC 3 domain occupies 1961–2019 (CRCEVDGLRYWPGQRMKLNCRLCTCLDGQPRRCRHNPACSVSCSWSAWSPWGECLGPCG). A TSP type-1 3 domain is found at 2002-2058 (SCSWSAWSPWGECLGPCGVQSIQWSFRSPSHPGKHGTNRQCRGIYRKARRCQTEPCQ). 3 disulfide bridges follow: C2003-C2042, C2014-C2018, and C2052-C2057. The VWFC 4 domain occupies 2058–2120 (QECEHQGRSR…GKGDSCCFCA (63 aa)). N2125 and N2230 each carry an N-linked (GlcNAc...) asparagine glycan. Disulfide bonds link C2162–C2310, C2328–C2339, C2335–C2352, and C2346–C2361. The F5/8 type C domain maps to 2162–2310 (CYSPLGIASL…IFLRAELLGC (149 aa)). The LDL-receptor class A 11 domain maps to 2327–2362 (PCGTGEFWCGVSCVTASRRCDGATDCPGGADEAGCE). The segment at 2352 to 2373 (CPGGADEAGCEPPSSTTLPTHP) is disordered. Over residues 2364–2373 (PSSTTLPTHP) the composition is skewed to polar residues. LDL-receptor class A domains lie at 2481 to 2517 (LCPP…AHCG) and 2538 to 2574 (TCSP…SSCA). 12 disulfide bridges follow: C2482–C2494, C2489–C2507, C2501–C2516, C2539–C2551, C2546–C2564, C2558–C2573, C2576–C2612, C2587–C2591, C2622–C2627, C2642–C2679, C2646–C2684, and C2657–C2669. TSP type-1 domains follow at residues 2575-2628 (DCIL…RACP) and 2630-2685 (PGAW…QPCG). In terms of domain architecture, TIL 5 spans 2708 to 2750 (PPCPQVCGDLSATSSCQSPCQEGCRCPPGLFLQEGTCVNASQC). N-linked (GlcNAc...) asparagine glycosylation is present at N2746. 3 TSP type-1 domains span residues 2790–2844 (ACAW…TPCA), 2849–2903 (SSGW…APCP), and 2905–2958 (AGVW…RPCG). Disulfide bonds link C2791-C2829, C2802-C2806, C2839-C2843, C2861-C2897, C2865-C2902, C2881-C2887, C2917-C2952, C2921-C2957, and C2932-C2942. The TIL 6 domain occupies 2971 to 3020 (EECRHSEGRCPWICQDLGAGVACTAQCQPGCHCPAGLLLQNGTCVPPSHC). N3011, N3042, and N3065 each carry an N-linked (GlcNAc...) asparagine glycan. Positions 3020–3077 (CLCHHRGHLYQPGDINALDTCNNCTCVTGQMVCSTETCPVPCTWSNWTAWSTCSHSCD) constitute a VWFC 5 domain. TSP type-1 domains lie at 3060–3115 (PCTW…QPCR) and 3117–3158 (VAPW…APCP). Intrachain disulfides connect C3061–C3099, C3072–C3076, and C3109–C3114. The N-linked (GlcNAc...) asparagine glycan is linked to N3136. A TIL 7 domain is found at 3165 to 3217 (CPPGKQWQACAQGAASCAELSAAPPADGSCHPGCYCPPGALLLNNECVAEAAC). The VWFC 6 domain occupies 3217 to 3275 (CPCAVDGVLYQPGDVVPQGCHNCSCIAGRVTNCSQEDCGDVDGPWTPWTPWSECSASCG). N3238 and N3248 each carry an N-linked (GlcNAc...) asparagine glycan. The TSP type-1 11 domain occupies 3258 to 3309 (DGPWTPWTPWSECSASCGPGRQRRYRFCSAHPGVPCAEPQPQERPCARQPCH). 3 disulfides stabilise this stretch: C3270-C3303, C3274-C3308, and C3285-C3293. N-linked (GlcNAc...) asparagine glycans are attached at residues N3350, N3366, and N3392. 2 TSP type-1 domains span residues 3410 to 3475 (PGAW…PPCP) and 3477 to 3532 (DGAW…SSCP). 6 disulfide bridges follow: C3422–C3468, C3426–C3474, C3437–C3449, C3489–C3524, C3492–C3531, and C3502–C3514. Positions 3534 to 3589 (CAGGLVAFTCGKPCPHSCEDLREDTACMATPRCLPACACPHGQLLQDGDCVPPELC) constitute a TIL 8 domain. N3598 and N3625 each carry an N-linked (GlcNAc...) asparagine glycan. TSP type-1 domains lie at 3644–3700 (DGGW…EGCP) and 3702–3751 (EEPW…HVCR). Intrachain disulfides connect C3656/C3693, C3660/C3699, C3671/C3683, C3714/C3745, C3718/C3750, and C3729/C3735. 2 N-linked (GlcNAc...) asparagine glycosylation sites follow: N3823 and N3869. 4 TSP type-1 domains span residues 3878–3934 (DGGF…PECP), 3951–4004 (EEGF…PLCS), 4018–4074 (NCSW…QACK), and 4076–4131 (DGAW…QPCD). 6 cysteine pairs are disulfide-bonded: C3890/C3928, C3894/C3933, C3906/C3918, C3963/C3998, C3967/C4003, and C3982/C3988. The interval 3932 to 3951 (ECPAVPTTEPGPGVAGAEEE) is disordered. N4018 carries an N-linked (GlcNAc...) asparagine glycan. Cystine bridges form between C4019-C4055, C4030-C4034, C4068-C4073, C4088-C4125, C4092-C4130, and C4103-C4115. The 56-residue stretch at 4134–4189 (CPPGMALVTCANHCPRHCGDLQEGIVCREEEHCEPGCRCPNGTLEQDGGCVPLAHC) folds into the TIL 9 domain. N4174 and N4211 each carry an N-linked (GlcNAc...) asparagine glycan. TSP type-1 domains lie at 4230–4282 (RCPW…GPCP), 4322–4384 (GAEH…RPCP), and 4386–4433 (ECSW…SGCS). Cystine bridges form between C4231-C4266, C4242-C4246, and C4276-C4281. The N-linked (GlcNAc...) asparagine glycan is linked to N4362. Cystine bridges form between C4387/C4417, C4398/C4400, and C4427/C4432. An N-linked (GlcNAc...) asparagine glycan is attached at N4428. The TIL 10 domain occupies 4437–4492 (CEPPFEFQPCSPPCARLCSTLQHPELCPAQSHCLPGCFCPQGLLEQRSACVPPEQC). A glycan (N-linked (GlcNAc...) asparagine) is linked at N4498. 2 consecutive TSP type-1 domains span residues 4537-4608 (LPLS…DICQ) and 4610-4662 (LCLW…AVCP). Cystine bridges form between C4548–C4601, C4551–C4607, C4575–C4591, C4611–C4646, C4622–C4626, and C4656–C4661. The TIL 11 domain occupies 4675 to 4722 (TTCANSCPRACADLWQHVECVQGGCKPGCRCPQGQLLQDGLCVPTAQC). 3 N-linked (GlcNAc...) asparagine glycosylation sites follow: N4730, N4747, and N4752. 2 TSP type-1 domains span residues 4762–4815 (CPSY…QPCP) and 4817–4869 (GCQL…HNCT). Disulfide bonds link C4774-C4809, C4778-C4814, C4789-C4798, C4818-C4852, C4829-C4833, and C4863-C4868. N-linked (GlcNAc...) asparagine glycosylation occurs at N4867. Positions 4872 to 4926 (CPRSQVHRECANACPHACADLRPQTQCLPQPCQPGCACPPGQVLQDGACVPPEEC) constitute a TIL 12 domain. 2 N-linked (GlcNAc...) asparagine glycosylation sites follow: N4939 and N4970. In terms of domain architecture, TSP type-1 27 spans 4979-5033 (DCLWSPWSPWSPCSVTCGMGERLSHRHPLRQRLYEGAECLGPPVRRAACHLPDCA). 3 cysteine pairs are disulfide-bonded: C4980/C5017, C4991/C4995, and C5027/C5032. N-linked (GlcNAc...) asparagine glycans are attached at residues N5081, N5122, and N5169. A VWFC 7 domain is found at 5092–5150 (CECLHQGQLHQPGSEWQEQCARCRCVDGKANCTDGCTPLSCPEGEVKVREPGRCCPVCR). 4 cysteine pairs are disulfide-bonded: C5161-C5209, C5175-C5226, C5185-C5242, and C5189-C5244. The CTCK domain occupies 5161–5248 (CRRFTELRNI…IHSCECSSCQ (88 aa)).

This sequence belongs to the thrombospondin family.

The protein localises to the secreted. It localises to the extracellular space. In terms of biological role, involved in the modulation of neuronal aggregation. May be involved in developmental events during the formation of the central nervous system. The polypeptide is SCO-spondin (SSPO) (Gallus gallus (Chicken)).